The chain runs to 464 residues: MMARRDPKSWAKRLVRAQTLQKQRRAPVGPRAPPPDEEDPRLKCKNCGAFGHTARSTRCPMKCWKAALVPATLGKKEGKENLKPWKPRAEANPGPLNKDKGEKEERPRQQDPQRKALLHMFSGKPPEKPLPNGKGSTESSDYLRVASGPMPVHTSSKRPRLDPILADRSATAMSGRGSVLASLSPLRKASLSSSSSLGPKERQTGAAADMPQPAVRHEGREPLLVVKPTHSRPEGGCREVPQAASKTHGLPQAARPQAQDKRPAVTSLPCPPAATHSLGLGSNLSFGPGAKRPAQAPIQACLNFPKKPRLGPFQIPESAIQGGELGAPENLQPPPAATELGPSTSPQMGRRTPAQVPSVDRQPPHSRPCLPTAQACTMSHHSAASHDGAQPLRVLFRRLENGRWSSSLLAAPSFHSPEKPGAFLAQSPHVSEKSEAPCVRVPPSVLYEDLQVSSSSEDSDSDLE.

3 disordered regions span residues 1-42 (MMAR…DPRL), 70-389 (PATL…HDGA), and 411-437 (APSFHSPEKPGAFLAQSPHVSEKSEAP). 2 stretches are compositionally biased toward basic and acidic residues: residues 74 to 89 (GKKEGKENLKPWKPRA) and 97 to 114 (NKDKGEKEERPRQQDPQR). The segment covering 180–197 (LASLSPLRKASLSSSSSL) has biased composition (low complexity).

Belongs to the FAM90 family.

In Homo sapiens (Human), this protein is Protein FAM90A12.